The chain runs to 344 residues: Anthranilate phosphoribosyltransferase (344 aa).

5-phospho-alpha-D-ribose 1-diphosphate contacts are provided by residues G85, 88–89 (GD), T93, 95–98 (NIST), 113–121 (KHGGRSVSS), and S125. G85 is an anthranilate binding site. A Mg(2+)-binding site is contributed by S97. Position 171 (R171) interacts with anthranilate. Mg(2+) contacts are provided by D230 and E231.

It belongs to the anthranilate phosphoribosyltransferase family. In terms of assembly, homodimer. The cofactor is Mg(2+).

The catalysed reaction is N-(5-phospho-beta-D-ribosyl)anthranilate + diphosphate = 5-phospho-alpha-D-ribose 1-diphosphate + anthranilate. Its pathway is amino-acid biosynthesis; L-tryptophan biosynthesis; L-tryptophan from chorismate: step 2/5. In terms of biological role, catalyzes the transfer of the phosphoribosyl group of 5-phosphorylribose-1-pyrophosphate (PRPP) to anthranilate to yield N-(5'-phosphoribosyl)-anthranilate (PRA). This chain is Anthranilate phosphoribosyltransferase, found in Acidovorax ebreus (strain TPSY) (Diaphorobacter sp. (strain TPSY)).